A 348-amino-acid polypeptide reads, in one-letter code: Rhodopsin (348 aa).

M1 carries the N-acetylmethionine modification. Topologically, residues 1–36 (MNGTEGPNFYVPFSNKTGVVRSPFEYPQYYLAEPWQ) are extracellular. N-linked (GlcNAc...) asparagine glycosylation is found at N2 and N15. The chain crosses the membrane as a helical span at residues 37-61 (FSMLAAYMFLLIVLGFPINFLTLYV). The Cytoplasmic portion of the chain corresponds to 62 to 73 (TVQHKKLRTPLN). A helical membrane pass occupies residues 74-96 (YILLNLAVADLFMVFGGFTTTLY). The Extracellular portion of the chain corresponds to 97-110 (TSLHGYFVFGPTGC). C110 and C187 are oxidised to a cystine. The helical transmembrane segment at 111–133 (NVEGFFATLGGEIALWSLVVLAI) threads the bilayer. Positions 134–136 (ERY) match the 'Ionic lock' involved in activated form stabilization motif. Topologically, residues 134–152 (ERYVVVCKPMSNFRFGENH) are cytoplasmic. A helical transmembrane segment spans residues 153–173 (AIMGVAFTWVMALACAAPPLA). Topologically, residues 174–202 (GWSRYIPEGMQCSCGIDYYTLKPEINNES) are extracellular. E201 provides a ligand contact to Zn(2+). Residues 203-224 (FVIYMFVVHFAIPMIVIFFCYG) form a helical membrane-spanning segment. Residues 225–252 (QLVFTVKEAAAQQQESATTQKAEKEVTR) lie on the Cytoplasmic side of the membrane. A helical transmembrane segment spans residues 253 to 274 (MVIIMVIAFLICWVPYASVAFY). Over 275 to 286 (IFTHQGSDFGPI) the chain is Extracellular. Zn(2+) is bound at residue Q279. The chain crosses the membrane as a helical span at residues 287–308 (FMTLPAFFAKSSSIYNPVIYIM). An N6-(retinylidene)lysine modification is found at K296. At 309 to 348 (MNKQFRNCMITTLCCGKNPLGDDEASASASKTETSQVAPA) the chain is on the cytoplasmic side. Residues C322 and C323 are each lipidated (S-palmitoyl cysteine). The interaction with SAG stretch occupies residues 330–348 (DDEASASASKTETSQVAPA). A phosphoserine mark is found at S334 and S338. T340 and T342 each carry phosphothreonine. Position 343 is a phosphoserine (S343).

Belongs to the G-protein coupled receptor 1 family. Opsin subfamily. In terms of assembly, homodimer. May form a complex composed of RHO, GRK1 and RCVRN in a Ca(2+)-dependent manner; RCVRN prevents the interaction between GRK1 and RHO. Interacts with GRK1. Interacts (phosphorylated form) with SAG. Interacts with GNAT1. Interacts with GNAT3. SAG and G-proteins compete for a common binding site. Interacts with PRCD; the interaction promotes PRCD stability. Forms a complex with ASAP1 and ARF4. Forms a complex with ASAP1, RAB11A, Rabin8/RAB3IP, ARF4 and RAB11FIP3; the complex regulates Golgi-to-cilia rhodopsin/RHO transport in photoreceptors. Post-translationally, phosphorylated on some or all of the serine and threonine residues present in the C-terminal region. In terms of processing, contains one covalently linked retinal chromophore. Upon light absorption, the covalently bound 11-cis-retinal is converted to all-trans-retinal. After hydrolysis of the Schiff base and release of the covalently bound all-trans-retinal, active rhodopsin is regenerated by binding of a fresh molecule of 11-cis-retinal.

Its subcellular location is the membrane. The protein resides in the cell projection. It localises to the cilium. It is found in the photoreceptor outer segment. Photoreceptor required for image-forming vision at low light intensity. Required for photoreceptor cell viability after birth. Light-induced isomerization of 11-cis to all-trans retinal triggers a conformational change that activates signaling via G-proteins. Subsequent receptor phosphorylation mediates displacement of the bound G-protein alpha subunit by the arrestin SAG and terminates signaling. This chain is Rhodopsin (RHO), found in Canis lupus familiaris (Dog).